Here is a 242-residue protein sequence, read N- to C-terminus: Invasion chromosome antigen R (242 aa).

The protein resides in the secreted. In terms of biological role, may contribute to pathogenesis, although some of its characteristics suggest it is a fossil gene. The protein is Invasion chromosome antigen R of Shigella flexneri serotype 5a (strain M90T).